The sequence spans 150 residues: Protein ORF35 (150 aa).

This Homo sapiens (Human) protein is Protein ORF35 (ORF35).